Here is a 226-residue protein sequence, read N- to C-terminus: MGVEIQSPQEQSSYTVEQLVALNPFNPEILPDLENYVNVTSQTYSLEVNLCLLRLYQFEPERMNTHIVARILVKALMAMPTPDFSLCLFLIPERVQMEEQFKSLIVLSHYLETGRFQQFWDEAAKNRHILEAVPGFEQAIQAYASHLLSLSYQKVPRSVLAEAVNMDGASLDKFIEQQVTNSGWIVEKEGGSIVLPQNEFNHPELKKNTGENVPLEHIARIFPILG.

Positions 44-202 constitute a PCI domain; sequence YSLEVNLCLL…IVLPQNEFNH (159 aa).

Belongs to the eIF-3 subunit K family. Component of the eukaryotic translation initiation factor 3 (eIF-3) complex.

Its subcellular location is the cytoplasm. Functionally, component of the eukaryotic translation initiation factor 3 (eIF-3) complex, which is involved in protein synthesis of a specialized repertoire of mRNAs and, together with other initiation factors, stimulates binding of mRNA and methionyl-tRNAi to the 40S ribosome. The eIF-3 complex specifically targets and initiates translation of a subset of mRNAs involved in cell proliferation. In Arabidopsis thaliana (Mouse-ear cress), this protein is Eukaryotic translation initiation factor 3 subunit K (TIF3K1).